Consider the following 363-residue polypeptide: UDP-N-acetylglucosamine--N-acetylmuramyl-(pentapeptide) pyrophosphoryl-undecaprenol N-acetylglucosamine transferase (363 aa).

UDP-N-acetyl-alpha-D-glucosamine is bound by residues 15–17 (TGG), Asn-127, Arg-163, Ser-191, Ile-244, 263–268 (ALTVSE), and Gln-288.

This sequence belongs to the glycosyltransferase 28 family. MurG subfamily.

Its subcellular location is the cell inner membrane. It catalyses the reaction di-trans,octa-cis-undecaprenyl diphospho-N-acetyl-alpha-D-muramoyl-L-alanyl-D-glutamyl-meso-2,6-diaminopimeloyl-D-alanyl-D-alanine + UDP-N-acetyl-alpha-D-glucosamine = di-trans,octa-cis-undecaprenyl diphospho-[N-acetyl-alpha-D-glucosaminyl-(1-&gt;4)]-N-acetyl-alpha-D-muramoyl-L-alanyl-D-glutamyl-meso-2,6-diaminopimeloyl-D-alanyl-D-alanine + UDP + H(+). Its pathway is cell wall biogenesis; peptidoglycan biosynthesis. Functionally, cell wall formation. Catalyzes the transfer of a GlcNAc subunit on undecaprenyl-pyrophosphoryl-MurNAc-pentapeptide (lipid intermediate I) to form undecaprenyl-pyrophosphoryl-MurNAc-(pentapeptide)GlcNAc (lipid intermediate II). The polypeptide is UDP-N-acetylglucosamine--N-acetylmuramyl-(pentapeptide) pyrophosphoryl-undecaprenol N-acetylglucosamine transferase (Pectobacterium carotovorum subsp. carotovorum (strain PC1)).